Consider the following 375-residue polypeptide: Probable sugar phosphate/phosphate translocator At3g17430 (375 aa).

Helical transmembrane passes span 9 to 29 (LVLTYIYLLIYIILSSGVILY), 43 to 63 (LPITLTMIHMGFAGFVAFLLI), 76 to 96 (FEIYATCVVPISAFFASSLWF), 106 to 126 (VAFIQMLKALMPVATFIMAVV), 140 to 160 (MLLVSVGVVISSYGEIHFNIV), 163 to 183 (VYQVTGIFAEALRLVLTQVLL), 193 to 213 (ITSLYYIAPCSFVFLALPWYV), 229 to 249 (WIFFSNALCALALNFSIFLVI), 257 to 276 (IRVAGVLKDWILIALSTVIF), and 280 to 302 (TITGLNITGYAIALCGVVMYNYI). The disordered stretch occupies residues 328 to 348 (EKKSSDKFNPNDSVEIPRVGG).

The protein belongs to the TPT transporter family. TPT (TC 2.A.7.9) subfamily.

It localises to the membrane. This Arabidopsis thaliana (Mouse-ear cress) protein is Probable sugar phosphate/phosphate translocator At3g17430.